The primary structure comprises 365 residues: MAGETTQLDLSVKAVGWGAADASGTLQPIKFYRRTPGERDVKIRVLYCGVCNFDMEMVRNKWGFTRYPYVFGHETAGEVIEVGSKVQKFKVGDKVGVGCMVGSCGKCFNCQNGMENYCPEPNMADGSVYREQQGEPSFGGCSNVMVVDEKFVLRWPENLPQDTGVPLLCAGIVVYSPMKYMGLDKPGKHIGVIGLGGLGSIAVKFIKAFGGKATVISTSKRKEKEAIEEHGADAFVVNTDTEKLQALAGTMDGVVDTTPGGRTPMSLMLNLLKFDGVVLLVGAPETLFELPVQPLILGRRKIIGSSTGGLKEYQETLDFAAQHNIVCDTEVIGIDYLSTAMERIKNLDVKYRFAIDIGNTLKYED.

Cys-51 provides a ligand contact to Zn(2+). Position 52 (Asn-52) interacts with NADP(+). Zn(2+) is bound by residues His-73, Glu-74, Cys-104, Cys-107, Cys-110, Cys-118, and Cys-169. Leu-195, Gly-197, Leu-198, Ser-217, Thr-218, Ser-219, Lys-222, Arg-262, Val-281, Ala-283, Ser-305, Thr-307, and Arg-352 together coordinate NADP(+).

It belongs to the zinc-containing alcohol dehydrogenase family. Class-III subfamily. In terms of assembly, homodimer. Zn(2+) serves as cofactor. Mainly expressed in roots and, to a lower level, in leaves.

The enzyme catalyses (19E)-geissoschizine + NADP(+) = 4,21-dehydrogeissoschizine + NADPH. It functions in the pathway alkaloid biosynthesis; ajmaline biosynthesis. Alcohol dehydrogenase involved in the biosynthesis of ajmaline-type monoterpenoid indole alkaloids (MIAs) natural products, important plant-derived pharmaceuticals used in the therapy of heart disorders. Catalyzes iminium reduction on 4,21-dehydrogeissoschizine to produce 19E-geissoschizine, precursor of vomilenine, an intermediate chemical in the biosynthesis of ajmaline. This is Geissoschizine synthase from Rauvolfia serpentina (Serpentine wood).